The following is a 633-amino-acid chain: Uracil permease (633 aa).

A run of 12 helical transmembrane segments spans residues 143-163, 173-193, 197-217, 242-262, 268-288, 310-330, 350-370, 400-420, 442-462, 465-485, 521-541, and 559-579; these read WWQCWITIWIGYGFVGAFVVL, LSFPISSRASFGIFFSLWPVI, VMAIVWYSVQAYIAATPVSLM, YEFMCFFIFWAASLPFLLVPP, LFTVKAVLVPFASFGFLIWAI, FSWAFLRSLMGCMANFSTMVI, LVCIPFLFSITCLIGILVTAA, AGVFLISFVFAVAQLGTNISA, GSLFCAAMALCICPWNLMATS, FTMALSAYAIFLSSIAGVVCS, ALAAYLCGVAPCLPGFIAEVG, and YWVGYGLSFSSYTALCYFFPV.

It belongs to the purine-cytosine permease (2.A.39) family. Post-translationally, glycosylated (possible); but there is not yet direct biochemical evidence for it.

It is found in the membrane. In terms of biological role, transport of uracil. The protein is Uracil permease (FUR4) of Saccharomyces cerevisiae (strain ATCC 204508 / S288c) (Baker's yeast).